Reading from the N-terminus, the 127-residue chain is Aspartate 1-decarboxylase (127 aa).

Residue serine 25 is the Schiff-base intermediate with substrate; via pyruvic acid of the active site. Pyruvic acid (Ser) is present on serine 25. A substrate-binding site is contributed by threonine 57. Catalysis depends on tyrosine 58, which acts as the Proton donor. 73–75 (GAA) is a binding site for substrate.

The protein belongs to the PanD family. Heterooctamer of four alpha and four beta subunits. Pyruvate serves as cofactor. In terms of processing, is synthesized initially as an inactive proenzyme, which is activated by self-cleavage at a specific serine bond to produce a beta-subunit with a hydroxyl group at its C-terminus and an alpha-subunit with a pyruvoyl group at its N-terminus.

It is found in the cytoplasm. The catalysed reaction is L-aspartate + H(+) = beta-alanine + CO2. Its pathway is cofactor biosynthesis; (R)-pantothenate biosynthesis; beta-alanine from L-aspartate: step 1/1. In terms of biological role, catalyzes the pyruvoyl-dependent decarboxylation of aspartate to produce beta-alanine. In Bacillus licheniformis (strain ATCC 14580 / DSM 13 / JCM 2505 / CCUG 7422 / NBRC 12200 / NCIMB 9375 / NCTC 10341 / NRRL NRS-1264 / Gibson 46), this protein is Aspartate 1-decarboxylase.